We begin with the raw amino-acid sequence, 287 residues long: Protease HtpX (287 aa).

The next 2 helical transmembrane spans lie at 4-24 and 33-53; these read IFLL…VMSI and SGLL…SLAI. Residue histidine 139 participates in Zn(2+) binding. Residue glutamate 140 is part of the active site. Histidine 143 contributes to the Zn(2+) binding site. Helical transmembrane passes span 154 to 174 and 195 to 215; these read LIQG…AGII and AVVF…VAYF. Glutamate 220 provides a ligand contact to Zn(2+).

Belongs to the peptidase M48B family. Zn(2+) is required as a cofactor.

The protein localises to the cell inner membrane. This is Protease HtpX from Shewanella piezotolerans (strain WP3 / JCM 13877).